A 247-amino-acid polypeptide reads, in one-letter code: Uracil-DNA glycosylase (247 aa).

Asp-83 acts as the Proton acceptor in catalysis.

This sequence belongs to the uracil-DNA glycosylase (UDG) superfamily. UNG family.

The protein localises to the cytoplasm. It carries out the reaction Hydrolyzes single-stranded DNA or mismatched double-stranded DNA and polynucleotides, releasing free uracil.. Functionally, excises uracil residues from the DNA which can arise as a result of misincorporation of dUMP residues by DNA polymerase or due to deamination of cytosine. The protein is Uracil-DNA glycosylase of Deinococcus radiodurans (strain ATCC 13939 / DSM 20539 / JCM 16871 / CCUG 27074 / LMG 4051 / NBRC 15346 / NCIMB 9279 / VKM B-1422 / R1).